A 659-amino-acid polypeptide reads, in one-letter code: DNA ligase (659 aa).

NAD(+)-binding positions include 32 to 36, 81 to 82, and glutamate 110; these read DQQYD and SL. Lysine 112 (N6-AMP-lysine intermediate) is an active-site residue. 4 residues coordinate NAD(+): arginine 133, glutamate 167, lysine 282, and lysine 306. 4 residues coordinate Zn(2+): cysteine 399, cysteine 402, cysteine 415, and cysteine 420. The BRCT domain occupies 582-659; that stretch reads IKNNIFKNKK…QEHEFEELIK (78 aa).

Belongs to the NAD-dependent DNA ligase family. LigA subfamily. Mg(2+) serves as cofactor. Mn(2+) is required as a cofactor.

The enzyme catalyses NAD(+) + (deoxyribonucleotide)n-3'-hydroxyl + 5'-phospho-(deoxyribonucleotide)m = (deoxyribonucleotide)n+m + AMP + beta-nicotinamide D-nucleotide.. In terms of biological role, DNA ligase that catalyzes the formation of phosphodiester linkages between 5'-phosphoryl and 3'-hydroxyl groups in double-stranded DNA using NAD as a coenzyme and as the energy source for the reaction. It is essential for DNA replication and repair of damaged DNA. In Phytoplasma mali (strain AT), this protein is DNA ligase.